A 335-amino-acid polypeptide reads, in one-letter code: 3-hydroxyisobutyrate dehydrogenase, mitochondrial (335 aa).

A mitochondrion-targeting transit peptide spans 1-35 (MAASLGFRGAASGLRYWSGRRRPVGSLAAVCSRSM). 39–68 (TPVGFIGLGNMGNPMAKNLIKHGYPLILYD) serves as a coordination point for NAD(+). N6-acetyllysine; alternate occurs at positions 59 and 75. N6-succinyllysine; alternate occurs at positions 59 and 75. Residue K94 is modified to N6-succinyllysine. Residues 102 to 103 (LP) and N107 contribute to the NAD(+) site. K120 is subject to N6-acetyllysine. Residue T133 participates in NAD(+) binding. N6-succinyllysine is present on K140. Residue K144 is modified to N6-acetyllysine. At K148 the chain carries N6-acetyllysine; alternate. K148 carries the post-translational modification N6-succinyllysine; alternate. K208 is a catalytic residue. N6-acetyllysine; alternate is present on residues K237 and K241. 2 positions are modified to N6-succinyllysine; alternate: K237 and K241. K283 is an NAD(+) binding site. K296 carries the post-translational modification N6-succinyllysine. N6-acetyllysine; alternate is present on K320. K320 is modified (N6-succinyllysine; alternate).

It belongs to the HIBADH-related family. 3-hydroxyisobutyrate dehydrogenase subfamily. In terms of assembly, homodimer. In terms of tissue distribution, higher level in kidney, liver, and heart than in muscle.

It localises to the mitochondrion. The enzyme catalyses 3-hydroxy-2-methylpropanoate + NAD(+) = 2-methyl-3-oxopropanoate + NADH + H(+). It functions in the pathway amino-acid degradation; L-valine degradation. The protein is 3-hydroxyisobutyrate dehydrogenase, mitochondrial (Hibadh) of Rattus norvegicus (Rat).